A 68-amino-acid chain; its full sequence is Large ribosomal subunit protein uL29 (68 aa).

Belongs to the universal ribosomal protein uL29 family.

This Archaeoglobus fulgidus (strain ATCC 49558 / DSM 4304 / JCM 9628 / NBRC 100126 / VC-16) protein is Large ribosomal subunit protein uL29 (rpl29).